Reading from the N-terminus, the 194-residue chain is MYIALEGIDTAGKSTQIELLKNEYKNNILFIKEPGFTKFGTKIREIIFNDDISKKAELFLFLADRAETIEKFVKPNLHKNILTDRSVISGIAYAMEFFDFNMLVNLNKFATDGIFPEFVIILKLDKETLQYRLSQKNHDNIEKRGLDYLINIQDNMIEVCNRLEIPYLLLDASKNIEEINFRIKKVISEYMDID.

7 to 14 (GIDTAGKS) is a binding site for ATP.

The protein belongs to the thymidylate kinase family.

The catalysed reaction is dTMP + ATP = dTDP + ADP. Phosphorylation of dTMP to form dTDP in both de novo and salvage pathways of dTTP synthesis. This Nautilia profundicola (strain ATCC BAA-1463 / DSM 18972 / AmH) protein is Thymidylate kinase.